The primary structure comprises 368 residues: tRNA/tmRNA (uracil-C(5))-methyltransferase (368 aa).

S-adenosyl-L-methionine contacts are provided by Gln-192, Tyr-220, Asn-225, Glu-241, and Asp-301. The active-site Nucleophile is the Cys-326. Residue Glu-360 is the Proton acceptor of the active site.

This sequence belongs to the class I-like SAM-binding methyltransferase superfamily. RNA M5U methyltransferase family. TrmA subfamily.

It catalyses the reaction uridine(54) in tRNA + S-adenosyl-L-methionine = 5-methyluridine(54) in tRNA + S-adenosyl-L-homocysteine + H(+). It carries out the reaction uridine(341) in tmRNA + S-adenosyl-L-methionine = 5-methyluridine(341) in tmRNA + S-adenosyl-L-homocysteine + H(+). Dual-specificity methyltransferase that catalyzes the formation of 5-methyluridine at position 54 (m5U54) in all tRNAs, and that of position 341 (m5U341) in tmRNA (transfer-mRNA). In Actinobacillus pleuropneumoniae serotype 7 (strain AP76), this protein is tRNA/tmRNA (uracil-C(5))-methyltransferase.